The following is a 214-amino-acid chain: Holliday junction branch migration complex subunit RuvA (214 aa).

Residues 1 to 63 (MISSLRGTVL…EDSLTLFGFP (63 aa)) form a domain I region. The interval 64-139 (GPDELRAFEL…KLFVTQPRTR (76 aa)) is domain II. Residues 139 to 143 (RSASS) are flexible linker. The tract at residues 144–214 (AASTVTADVV…APAAAQAADR (71 aa)) is domain III.

This sequence belongs to the RuvA family. As to quaternary structure, homotetramer. Forms an RuvA(8)-RuvB(12)-Holliday junction (HJ) complex. HJ DNA is sandwiched between 2 RuvA tetramers; dsDNA enters through RuvA and exits via RuvB. An RuvB hexamer assembles on each DNA strand where it exits the tetramer. Each RuvB hexamer is contacted by two RuvA subunits (via domain III) on 2 adjacent RuvB subunits; this complex drives branch migration. In the full resolvosome a probable DNA-RuvA(4)-RuvB(12)-RuvC(2) complex forms which resolves the HJ.

It is found in the cytoplasm. The RuvA-RuvB-RuvC complex processes Holliday junction (HJ) DNA during genetic recombination and DNA repair, while the RuvA-RuvB complex plays an important role in the rescue of blocked DNA replication forks via replication fork reversal (RFR). RuvA specifically binds to HJ cruciform DNA, conferring on it an open structure. The RuvB hexamer acts as an ATP-dependent pump, pulling dsDNA into and through the RuvAB complex. HJ branch migration allows RuvC to scan DNA until it finds its consensus sequence, where it cleaves and resolves the cruciform DNA. The sequence is that of Holliday junction branch migration complex subunit RuvA from Clavibacter sepedonicus (Clavibacter michiganensis subsp. sepedonicus).